The following is a 760-amino-acid chain: Cyclin-D-binding Myb-like transcription factor 1 (760 aa).

Residues 1–237 form an interaction with CCND2 region; it reads MSTVEEDSDT…TPEEIEKLKE (237 aa). The required for transcriptional activation stretch occupies residues 87–170; it reads VTMTATTEVA…IDILMNNIER (84 aa). The segment at 87 to 458 is required for DNA-binding; the sequence is VTMTATTEVA…DNTAISSSPM (372 aa). The tract at residues 176–760 is interaction with CCND1, CCND2 and CCND3; the sequence is GIKDATEIIF…KDVEDLVNCH (585 aa). A Myb-like 1 domain is found at 225–263; sequence GKYTPEEIEKLKELRIKHGNDWATIGAALGRSASSVKDR. The 66-residue stretch at 268 to 333 folds into the HTH myb-type domain; the sequence is KDTCNTGKWT…KWLNYLNWKQ (66 aa). A DNA-binding region (H-T-H motif) is located at residues 306–329; sequence WAAVAERVGTRSEKQCRSKWLNYL. The 50-residue stretch at 339-388 folds into the Myb-like 2 domain; sequence WTKEDEINLILRIAELDVADENDINWDLLAEGWSSVRSPQWLRSKWWTIK. Disordered stretches follow at residues 414-435 and 738-760; these read KNNPTLLENKSGSGVPNSNTNS and IGSSLGSPVSEDSKDVEDLVNCH. Positions 459–760 are required for transcriptional activation; the sequence is AALQIPVQIT…KDVEDLVNCH (302 aa).

It belongs to the DMTF1 family. In terms of assembly, interacts with the D-type cyclins CCND1, CCND2 and CCND3. Interaction with D-type cyclins may modulate transcriptional activation by this protein. In terms of processing, phosphorylated by the cyclin-D2/CDK4, cyclin-D3/CDK4 and cyclin-D2/CDK6 complexes and to a lesser extent by the cyclin-D1/CDK4 complex. Expressed at relatively low levels in colonic mucosa, ovary, peripheral leukocytes, prostate and small intestine, and at higher levels in spleen, testis and thymus. Expressed in multiple regions of the brain and CNS including amygdala, caudate, corpus callosum, hippocampus, substantia nigra and subthalamic nucleus. Isoform 1 is the predominant isoform in monocytes, macrophages and neutrophils, isoform 2 is most strongly expressed in peripheral blood leukocytes and quiescent CD34 positive cells, and isoform 3 is expressed at low levels in all hematopoietic cell types. Expression is frequently reduced in non-small-cell lung carcinomas (NSCLC) due to hemizygous gene deletion, strongly suggesting that this locus is haploinsufficient for tumor suppression. Loss of this locus frequently occurs in tumors which retain wild-type CDKN2A/ARF and p53/TP53 loci. Hemizygous gene deletion has also been observed in leukemic blasts from patients with abnormalities of the long arm of chromosome 7.

It is found in the nucleus. Functionally, transcriptional activator which activates the CDKN2A/ARF locus in response to Ras-Raf signaling, thereby promoting p53/TP53-dependent growth arrest. Binds to the consensus sequence 5'-CCCG[GT]ATGT-3'. Isoform 1 may cooperate with MYB to activate transcription of the ANPEP gene. Isoform 2 may antagonize transcriptional activation by isoform 1. The sequence is that of Cyclin-D-binding Myb-like transcription factor 1 (DMTF1) from Homo sapiens (Human).